The following is a 165-amino-acid chain: Protein-export protein SecB (165 aa).

This sequence belongs to the SecB family. In terms of assembly, homotetramer, a dimer of dimers. One homotetramer interacts with 1 SecA dimer.

The protein localises to the cytoplasm. In terms of biological role, one of the proteins required for the normal export of preproteins out of the cell cytoplasm. It is a molecular chaperone that binds to a subset of precursor proteins, maintaining them in a translocation-competent state. It also specifically binds to its receptor SecA. This Colwellia psychrerythraea (strain 34H / ATCC BAA-681) (Vibrio psychroerythus) protein is Protein-export protein SecB.